The sequence spans 205 residues: Adenylyl-sulfate kinase (205 aa).

An ATP-binding site is contributed by 31-38 (GLSGAGKS). Serine 105 serves as the catalytic Phosphoserine intermediate.

It belongs to the APS kinase family.

The enzyme catalyses adenosine 5'-phosphosulfate + ATP = 3'-phosphoadenylyl sulfate + ADP + H(+). It participates in sulfur metabolism; hydrogen sulfide biosynthesis; sulfite from sulfate: step 2/3. Catalyzes the synthesis of activated sulfate. The chain is Adenylyl-sulfate kinase from Shewanella baltica (strain OS155 / ATCC BAA-1091).